Consider the following 327-residue polypeptide: MKITSLKNRNLLTMNEFNQSELSHLIDRAIECKRLKKDRIFNLGLNHLNICGIFLKPSGRTSTSFVVASYDEGAHFQFFPADNIRFGHKESIKDFARVVGRLFDGIAFRGFEHEVAEELAKHSGIPVWNALTDTHHPTQVLADVMTVKEEFGRIEGVTIAYVGDGRNNMVTSLAIGALKFGYNLRIIAPNALHPTDAVLAGIYEQTPERNGSIEIFTEVAAGVHQADVIYTDVWISMGESVSVEERIALLKPYKVTEKMMALTGKADTIFMHCLPAFHDLDTEVARETPDLVEVEDSVFEGPQSRVFDQGENRMHTIKALMLETVVP.

Residues Arg109 and 136–139 (HPTQ) contribute to the carbamoyl phosphate site. Residues Asn168, Asp232, and 236–237 (SM) each bind L-ornithine. Residues 273-274 (CL) and Arg313 each bind carbamoyl phosphate.

Belongs to the aspartate/ornithine carbamoyltransferase superfamily. OTCase family. Homotrimer.

The protein resides in the cytoplasm. It catalyses the reaction carbamoyl phosphate + L-ornithine = L-citrulline + phosphate + H(+). It participates in amino-acid biosynthesis; L-arginine biosynthesis; L-arginine from L-ornithine and carbamoyl phosphate: step 1/3. In terms of biological role, plays an important role in the survival and pathogenicity of P.syringae. Phaseolotoxin is a virulence factor that inhibits the catalysis of the host OTCase. Phaseolotoxin-producing bacteria do not suffer autointoxication because they possess the anabolic OTCase ArgK which can function even in the presence of phaseolotoxin. Reversibly catalyzes the transfer of the carbamoyl group from carbamoyl phosphate (CP) to the N(epsilon) atom of ornithine (ORN) to produce L-citrulline, which is a substrate for argininosuccinate synthetase, the enzyme involved in the final step in arginine biosynthesis. This chain is Ornithine carbamoyltransferase 2, anabolic, found in Pseudomonas savastanoi pv. phaseolicola (Pseudomonas syringae pv. phaseolicola).